A 128-amino-acid chain; its full sequence is MLIFLEVKYMNFHNRKLDEELIDYNISLRILFTILSVAIIMVAFDSLGSSVSDPVGDALCKLIKVFRGNTAKGIAVVGIIVLGIQTLRGKLQWEVALVVVTAIIILFKAPDIVNMVSSDNNSSSCGVS.

3 helical membrane-spanning segments follow: residues 30–50, 65–85, and 93–113; these read ILFTILSVAIIMVAFDSLGSS, VFRGNTAKGIAVVGIIVLGIQ, and WEVALVVVTAIIILFKAPDIV.

It localises to the cell membrane. This is an uncharacterized protein from Rickettsia prowazekii (strain Madrid E).